A 424-amino-acid chain; its full sequence is MHFFPIQLLVLFFAEKIAFAENSDQTVSRVDSNRYSVAAEKKFLLYDVNFGEGFNLRRDVYMRVANTVRSLRDSGENYILVLPPWGRLHHWKRMEVALSWRLFFDLESLNRFIPVIEFEDFLDENRPIDQVIYLQHYAEGWGTEYVRKFEKRSCLPPAESHYKQVEEFKWKGWFYSYEDVYSRNFQCVSIQGDSGTLKDLLKHSNFSESTSIMVDRAETILHEHYGEVDYWKARRSMRYSNDLVDVADAFRKKYLDSDDKRDKTKLVDDWTKEKPRRTAIGGPYLGIHWRRRDFLYARRAQLPTIPGTAKILQDLCKKLDLQKIYLATDAPDQEVDELKALLNGELEVYRFTDTQKLNDGQIAIIDQYLCAHAAYFIGSYESTFTFRIQEDREIIGFPISTTFNRLCPDTEPTCEQPAKWKIVY.

A signal peptide spans 1-20 (MHFFPIQLLVLFFAEKIAFA). Residue 51-55 (GEGFN) participates in GDP-beta-L-fucose binding. The Proton acceptor role is filled by E52. The cysteines at positions 154 and 187 are disulfide-linked. N205 is a glycosylation site (N-linked (GlcNAc...) asparagine). GDP-beta-L-fucose-binding positions include 288–290 (HWR), D366, and 383–384 (TF). Cysteines 407 and 414 form a disulfide.

Belongs to the glycosyltransferase 68 family. As to expression, expressed in the anterior part of embryos, in the hypodermal and neuronal cells of the head. Expressed at different levels in a variety of cell types after hatching, including neuronal, hypodermal, muscle, intestinal, and somatic gonadal cells. Expressed in the nerve ring around the pharynx, in dorsal and ventral nerve cords, intestine, and a variety of hypodermal cells of L1-L3 larvae. Expressed in gonadal sheath cells, spermatheca, and tissues surrounding the vulva of adult hermaphrodites, and in the body wall muscle and hypodermal cells of adults of both sexes.

Its subcellular location is the endoplasmic reticulum. It localises to the golgi apparatus. It carries out the reaction L-seryl-[protein] + GDP-beta-L-fucose = 3-O-(alpha-L-fucosyl)-L-seryl-[protein] + GDP + H(+). The enzyme catalyses L-threonyl-[protein] + GDP-beta-L-fucose = 3-O-(alpha-L-fucosyl)-L-threonyl-[protein] + GDP + H(+). Its pathway is protein modification; protein glycosylation. Catalyzes the reaction that attaches fucose through an O-glycosidic linkage to a conserved serine or threonine residue in the consensus sequence C1-X-X-S/T-C2 of thrombospondin type I repeats (TSRs) where C1 and C2 are the first and second cysteines of the repeat, respectively. O-fucosylates members of several protein families including the ADAMTS superfamily and the thrombospondin (TSP) and spondin families. The protein is GDP-fucose protein O-fucosyltransferase 2 (pad-2) of Caenorhabditis elegans.